The sequence spans 314 residues: Methionyl-tRNA formyltransferase (314 aa).

110–113 lines the (6S)-5,6,7,8-tetrahydrofolate pocket; that stretch reads SLLP.

This sequence belongs to the Fmt family.

It carries out the reaction L-methionyl-tRNA(fMet) + (6R)-10-formyltetrahydrofolate = N-formyl-L-methionyl-tRNA(fMet) + (6S)-5,6,7,8-tetrahydrofolate + H(+). Functionally, attaches a formyl group to the free amino group of methionyl-tRNA(fMet). The formyl group appears to play a dual role in the initiator identity of N-formylmethionyl-tRNA by promoting its recognition by IF2 and preventing the misappropriation of this tRNA by the elongation apparatus. The chain is Methionyl-tRNA formyltransferase from Bacillus anthracis (strain A0248).